Reading from the N-terminus, the 274-residue chain is 5-deoxy-glucuronate isomerase (274 aa).

This sequence belongs to the isomerase IolB family.

It catalyses the reaction 5-deoxy-D-glucuronate = 5-dehydro-2-deoxy-D-gluconate. Its pathway is polyol metabolism; myo-inositol degradation into acetyl-CoA; acetyl-CoA from myo-inositol: step 4/7. Functionally, involved in the isomerization of 5-deoxy-glucuronate (5DG) to 5-dehydro-2-deoxy-D-gluconate (DKG or 2-deoxy-5-keto-D-gluconate). This chain is 5-deoxy-glucuronate isomerase, found in Geobacillus thermodenitrificans (strain NG80-2).